A 345-amino-acid chain; its full sequence is UDP-N-acetylenolpyruvoylglucosamine reductase (345 aa).

The region spanning 16 to 186 is the FAD-binding PCMH-type domain; the sequence is LSVSASCIKV…TAVGIFLKKE (171 aa). Residue Arg162 is part of the active site. The active-site Proton donor is Ser232. Glu328 is an active-site residue.

The protein belongs to the MurB family. It depends on FAD as a cofactor.

It is found in the cytoplasm. It carries out the reaction UDP-N-acetyl-alpha-D-muramate + NADP(+) = UDP-N-acetyl-3-O-(1-carboxyvinyl)-alpha-D-glucosamine + NADPH + H(+). It participates in cell wall biogenesis; peptidoglycan biosynthesis. Its function is as follows. Cell wall formation. In Pectobacterium atrosepticum (strain SCRI 1043 / ATCC BAA-672) (Erwinia carotovora subsp. atroseptica), this protein is UDP-N-acetylenolpyruvoylglucosamine reductase.